The primary structure comprises 476 residues: Dermokine (476 aa).

Positions 1–21 (MKFQGPLACLLLALCLGSGEA) are cleaved as a signal peptide. Composition is skewed to gly residues over residues 153–169 (SQGGLGGQGQGNPGGLG), 193–202 (WGQGGNGGPP), 236–259 (GSGGGSSNSGGGSGSQSGSSGSGS), and 268–298 (SSGGSSSGSSSGGSSGGSSGGSSGNSGGSRG). Positions 153-351 (SQGGLGGQGQ…ESGIQNSETS (199 aa)) are disordered. Over residues 299 to 315 (DSGSESSWGSSTGSSSG) the composition is skewed to low complexity. Gly residues predominate over residues 316 to 326 (NHGGSGGGNGH).

The protein belongs to the dermokine family. Homooligomer. Seems to be able to homodimerize and homotrimerize. In terms of processing, O-glycosylated. In terms of tissue distribution, expressed in epidermis; in the spinous and granular layers and in placenta. Also found in the epithelia of the small intestine, macrophages of the lung and endothelial cells of the lung. Isoform 15 is expressed in epidermis and placenta. Isoform 1 is expressed in epidermis.

The protein localises to the secreted. In terms of biological role, may act as a soluble regulator of keratinocyte differentiation. This Homo sapiens (Human) protein is Dermokine (DMKN).